Reading from the N-terminus, the 184-residue chain is ATP synthase subunit b 1 (184 aa).

A helical membrane pass occupies residues 36 to 55 (NILNLAILVGVLVFYGRKVV).

It belongs to the ATPase B chain family. In terms of assembly, F-type ATPases have 2 components, F(1) - the catalytic core - and F(0) - the membrane proton channel. F(1) has five subunits: alpha(3), beta(3), gamma(1), delta(1), epsilon(1). F(0) has four main subunits: a(1), b(1), b'(1) and c(10-14). The alpha and beta chains form an alternating ring which encloses part of the gamma chain. F(1) is attached to F(0) by a central stalk formed by the gamma and epsilon chains, while a peripheral stalk is formed by the delta, b and b' chains.

The protein localises to the cellular thylakoid membrane. F(1)F(0) ATP synthase produces ATP from ADP in the presence of a proton or sodium gradient. F-type ATPases consist of two structural domains, F(1) containing the extramembraneous catalytic core and F(0) containing the membrane proton channel, linked together by a central stalk and a peripheral stalk. During catalysis, ATP synthesis in the catalytic domain of F(1) is coupled via a rotary mechanism of the central stalk subunits to proton translocation. Its function is as follows. Component of the F(0) channel, it forms part of the peripheral stalk, linking F(1) to F(0). The sequence is that of ATP synthase subunit b 1 from Crocosphaera subtropica (strain ATCC 51142 / BH68) (Cyanothece sp. (strain ATCC 51142)).